A 417-amino-acid polypeptide reads, in one-letter code: Squalene synthase (417 aa).

NADP(+)-binding residues include Arg52 and Arg77. Residues Asp80, Glu83, and Asp84 each contribute to the Mg(2+) site. Position 218 (Arg218) interacts with NADP(+). Residues 284–304 (SVFNFCAIPQVMAIATLAACY) traverse the membrane as a helical segment. 2 residues coordinate NADP(+): Lys315 and Arg317. Residues 384 to 404 (PIYLSFVMLLAALSWQYLTTL) form a helical membrane-spanning segment.

This sequence belongs to the phytoene/squalene synthase family. Mg(2+) serves as cofactor. In terms of tissue distribution, widely expressed.

It localises to the endoplasmic reticulum membrane. The enzyme catalyses 2 (2E,6E)-farnesyl diphosphate + NADPH + H(+) = squalene + 2 diphosphate + NADP(+). It catalyses the reaction 2 (2E,6E)-farnesyl diphosphate + NADH + H(+) = squalene + 2 diphosphate + NAD(+). It carries out the reaction 2 (2E,6E)-farnesyl diphosphate = presqualene diphosphate + diphosphate. The catalysed reaction is presqualene diphosphate + NADH + H(+) = squalene + diphosphate + NAD(+). The enzyme catalyses presqualene diphosphate + NADPH + H(+) = squalene + diphosphate + NADP(+). It functions in the pathway terpene metabolism; lanosterol biosynthesis; lanosterol from farnesyl diphosphate: step 1/3. Catalyzes the condensation of 2 farnesyl pyrophosphate (FPP) moieties to form squalene. Proceeds in two distinct steps. In the first half-reaction, two molecules of FPP react to form the stable presqualene diphosphate intermediate (PSQPP), with concomitant release of a proton and a molecule of inorganic diphosphate. In the second half-reaction, PSQPP undergoes heterolysis, isomerization, and reduction with NADPH or NADH to form squalene. It is the first committed enzyme of the sterol biosynthesis pathway. This chain is Squalene synthase (FDFT1), found in Homo sapiens (Human).